The following is a 558-amino-acid chain: Potassium-transporting ATPase potassium-binding subunit (558 aa).

The next 12 membrane-spanning stretches (helical) occupy residues 1 to 21 (MSIV…SRYL), 60 to 80 (IKHF…LLLI), 129 to 149 (VITF…IAML), 169 to 189 (FIVR…ISQG), 246 to 266 (WSNY…VFLF), 281 to 301 (IMIF…CLYF), 326 to 346 (FGIG…TGTV), 353 to 373 (LTPL…VFGG), 376 to 396 (VGLM…SLMI), 415 to 435 (IALS…LAFI), 485 to 505 (IVML…VSSL), and 523 to 543 (LFFS…TFLP).

This sequence belongs to the KdpA family. As to quaternary structure, the system is composed of three essential subunits: KdpA, KdpB and KdpC.

The protein resides in the cell membrane. In terms of biological role, part of the high-affinity ATP-driven potassium transport (or Kdp) system, which catalyzes the hydrolysis of ATP coupled with the electrogenic transport of potassium into the cytoplasm. This subunit binds the extracellular potassium ions and delivers the ions to the membrane domain of KdpB through an intramembrane tunnel. The chain is Potassium-transporting ATPase potassium-binding subunit from Staphylococcus haemolyticus (strain JCSC1435).